The sequence spans 361 residues: Phospho-N-acetylmuramoyl-pentapeptide-transferase (361 aa).

Transmembrane regions (helical) follow at residues 25–45 (RGIL…PAVI), 73–93 (TMGG…WGDL), 98–118 (VWLV…DDWI), 139–159 (IFGL…AAIT), 168–188 (IALP…IVGF), 200–220 (GLAI…AYAS), 237–257 (AGEL…FLWF), 264–284 (VFMG…IAVI), 290–310 (VLVI…IQVV), and 339–359 (VIVR…ATLK).

It belongs to the glycosyltransferase 4 family. MraY subfamily. Requires Mg(2+) as cofactor.

The protein resides in the cell inner membrane. The enzyme catalyses UDP-N-acetyl-alpha-D-muramoyl-L-alanyl-gamma-D-glutamyl-meso-2,6-diaminopimeloyl-D-alanyl-D-alanine + di-trans,octa-cis-undecaprenyl phosphate = di-trans,octa-cis-undecaprenyl diphospho-N-acetyl-alpha-D-muramoyl-L-alanyl-D-glutamyl-meso-2,6-diaminopimeloyl-D-alanyl-D-alanine + UMP. Its pathway is cell wall biogenesis; peptidoglycan biosynthesis. Catalyzes the initial step of the lipid cycle reactions in the biosynthesis of the cell wall peptidoglycan: transfers peptidoglycan precursor phospho-MurNAc-pentapeptide from UDP-MurNAc-pentapeptide onto the lipid carrier undecaprenyl phosphate, yielding undecaprenyl-pyrophosphoryl-MurNAc-pentapeptide, known as lipid I. This Xanthomonas euvesicatoria pv. vesicatoria (strain 85-10) (Xanthomonas campestris pv. vesicatoria) protein is Phospho-N-acetylmuramoyl-pentapeptide-transferase.